The sequence spans 368 residues: Agmatine deiminase (368 aa).

Residue cysteine 357 is the Amidino-cysteine intermediate of the active site.

This sequence belongs to the agmatine deiminase family. In terms of assembly, homodimer.

It catalyses the reaction agmatine + H2O = N-carbamoylputrescine + NH4(+). It functions in the pathway amine and polyamine biosynthesis; putrescine biosynthesis via agmatine pathway; N-carbamoylputrescine from agmatine: step 1/1. Its function is as follows. Mediates the hydrolysis of agmatine into N-carbamoylputrescine in the arginine decarboxylase (ADC) pathway of putrescine biosynthesis, a basic polyamine. The sequence is that of Agmatine deiminase from Pseudomonas fluorescens (strain SBW25).